The following is a 593-amino-acid chain: UvrABC system protein C (593 aa).

The GIY-YIG domain maps to D14–I91. The UVR domain maps to N196–L231.

This sequence belongs to the UvrC family. As to quaternary structure, interacts with UvrB in an incision complex.

It is found in the cytoplasm. Its function is as follows. The UvrABC repair system catalyzes the recognition and processing of DNA lesions. UvrC both incises the 5' and 3' sides of the lesion. The N-terminal half is responsible for the 3' incision and the C-terminal half is responsible for the 5' incision. This is UvrABC system protein C from Streptococcus agalactiae serotype V (strain ATCC BAA-611 / 2603 V/R).